Reading from the N-terminus, the 144-residue chain is Putative golgin subfamily A member 2B (144 aa).

2 disordered regions span residues 1–20 and 95–132; these read MDSEEEEEVPQPMPSIPEDL and SCGRVHRTVPEPEGSAEGGGVHQQAGPGQGRGEGEAAG. Residues 110–131 show a composition bias toward gly residues; sequence AEGGGVHQQAGPGQGRGEGEAA.

Belongs to the GOLGA2 family.

In Homo sapiens (Human), this protein is Putative golgin subfamily A member 2B (GOLGA2P5).